The chain runs to 56 residues: Large ribosomal subunit protein bL32 (56 aa).

Positions Met1–His40 are disordered. Residues Lys7–Arg16 show a composition bias toward basic residues. The segment covering Ser21–Ala31 has biased composition (polar residues).

It belongs to the bacterial ribosomal protein bL32 family.

In Shewanella halifaxensis (strain HAW-EB4), this protein is Large ribosomal subunit protein bL32.